The sequence spans 284 residues: uncharacterized protein (284 aa).

One can recognise an AB hydrolase-1 domain in the interval 25–123 (PILVMHGGHS…NTLTLQSAVT (99 aa)). Residue Ser96 is part of the active site.

It belongs to the AB hydrolase superfamily.

This is an uncharacterized protein from Bacillus subtilis (strain 168).